A 317-amino-acid polypeptide reads, in one-letter code: MSLYRSVVWFAKGLREYTKSGYESACKDFVPHDLEVQIPGRVFLVTGGNSGIGKATALEIAKRGGTVHLVCRDQAPAEDARGEIIRESGNQNIFLHIVDLSDPKQIWKFVENFKQEHKLHVLINNAGCMVNKRELTEDGLEKNFAANTLGVYILTTGLIPVLEKEHDPRVITVSSGGMLVQKLNTNDLQSERTPFDGTMVYAQNKRQQVVLTERWAQGHPAIHFSSMHPGWADTPGVRQAMPGFHARFGDRLRSEAQGADTMLWLALSSAAAAQPSGRFFQDRKPVSTHLPLATASSSPAEEEKLIEILEQLAQTFK.

NAD(+)-binding residues include serine 50 and isoleucine 52. A substrate-binding site is contributed by serine 175. 3 residues coordinate NAD(+): tyrosine 201, lysine 205, and threonine 234. The active-site Proton acceptor is tyrosine 201.

Belongs to the short-chain dehydrogenases/reductases (SDR) family.

In terms of biological role, putative oxidoreductase. The chain is Dehydrogenase/reductase SDR family member 12 from Homo sapiens (Human).